The chain runs to 317 residues: Regulator of microtubule dynamics protein 1 (317 aa).

N6-succinyllysine is present on Lys168. TPR repeat units lie at residues 171-207 and 225-261; these read AICIGDVGDYEGIKAKIANAYIIKEHFEKAIELNPKD and PWYQRRIAKVLFATPPGSTYEEALGYFHRAEQVDPNF.

The protein belongs to the RMDN family. As to quaternary structure, interacts with microtubules.

The protein localises to the cytoplasm. The protein resides in the cytoskeleton. It is found in the spindle. It localises to the spindle pole. This is Regulator of microtubule dynamics protein 1 (RMDN1) from Bos taurus (Bovine).